A 180-amino-acid chain; its full sequence is ATP synthase subunit delta (180 aa).

The protein belongs to the ATPase delta chain family. F-type ATPases have 2 components, F(1) - the catalytic core - and F(0) - the membrane proton channel. F(1) has five subunits: alpha(3), beta(3), gamma(1), delta(1), epsilon(1). F(0) has three main subunits: a(1), b(2) and c(10-14). The alpha and beta chains form an alternating ring which encloses part of the gamma chain. F(1) is attached to F(0) by a central stalk formed by the gamma and epsilon chains, while a peripheral stalk is formed by the delta and b chains.

Its subcellular location is the cell inner membrane. Its function is as follows. F(1)F(0) ATP synthase produces ATP from ADP in the presence of a proton or sodium gradient. F-type ATPases consist of two structural domains, F(1) containing the extramembraneous catalytic core and F(0) containing the membrane proton channel, linked together by a central stalk and a peripheral stalk. During catalysis, ATP synthesis in the catalytic domain of F(1) is coupled via a rotary mechanism of the central stalk subunits to proton translocation. This protein is part of the stalk that links CF(0) to CF(1). It either transmits conformational changes from CF(0) to CF(1) or is implicated in proton conduction. This is ATP synthase subunit delta from Acidovorax sp. (strain JS42).